Consider the following 81-residue polypeptide: Photosystem I iron-sulfur center (81 aa).

2 4Fe-4S ferredoxin-type domains span residues 2-31 (AHTV…MVPW) and 39-68 (IASA…IRVY). Cys-11, Cys-14, Cys-17, Cys-21, Cys-48, Cys-51, Cys-54, and Cys-58 together coordinate [4Fe-4S] cluster.

In terms of assembly, the eukaryotic PSI reaction center is composed of at least 11 subunits. The cofactor is [4Fe-4S] cluster.

It localises to the plastid. It is found in the cyanelle thylakoid membrane. It carries out the reaction reduced [plastocyanin] + hnu + oxidized [2Fe-2S]-[ferredoxin] = oxidized [plastocyanin] + reduced [2Fe-2S]-[ferredoxin]. Apoprotein for the two 4Fe-4S centers FA and FB of photosystem I (PSI); essential for photochemical activity. FB is the terminal electron acceptor of PSI, donating electrons to ferredoxin. The C-terminus interacts with PsaA/B/D and helps assemble the protein into the PSI complex. Required for binding of PsaD and PsaE to PSI. PSI is a cytochrome c6-ferredoxin oxidoreductase, converting photonic excitation into a charge separation, which transfers an electron from the donor P700 chlorophyll pair to the spectroscopically characterized acceptors A0, A1, FX, FA and FB in turn. This is Photosystem I iron-sulfur center from Cyanophora paradoxa.